A 101-amino-acid polypeptide reads, in one-letter code: Fructose-bisphosphate aldolase (101 aa).

K11 acts as the Schiff-base intermediate with dihydroxyacetone-P in catalysis.

Belongs to the class I fructose-bisphosphate aldolase family.

The catalysed reaction is beta-D-fructose 1,6-bisphosphate = D-glyceraldehyde 3-phosphate + dihydroxyacetone phosphate. Its pathway is carbohydrate degradation; glycolysis; D-glyceraldehyde 3-phosphate and glycerone phosphate from D-glucose: step 4/4. This is Fructose-bisphosphate aldolase from Lymnaea stagnalis (Great pond snail).